Here is a 226-residue protein sequence, read N- to C-terminus: tRNA (guanine-N(1)-)-methyltransferase (226 aa).

S-adenosyl-L-methionine-binding positions include Gly-112 and 132 to 137; that span reads IGDYVL.

This sequence belongs to the RNA methyltransferase TrmD family. As to quaternary structure, homodimer.

The protein localises to the cytoplasm. The enzyme catalyses guanosine(37) in tRNA + S-adenosyl-L-methionine = N(1)-methylguanosine(37) in tRNA + S-adenosyl-L-homocysteine + H(+). Specifically methylates guanosine-37 in various tRNAs. The sequence is that of tRNA (guanine-N(1)-)-methyltransferase from Flavobacterium johnsoniae (strain ATCC 17061 / DSM 2064 / JCM 8514 / BCRC 14874 / CCUG 350202 / NBRC 14942 / NCIMB 11054 / UW101) (Cytophaga johnsonae).